A 148-amino-acid polypeptide reads, in one-letter code: 3-hydroxyacyl-[acyl-carrier-protein] dehydratase FabZ (148 aa).

His48 is a catalytic residue.

This sequence belongs to the thioester dehydratase family. FabZ subfamily.

The protein resides in the cytoplasm. It carries out the reaction a (3R)-hydroxyacyl-[ACP] = a (2E)-enoyl-[ACP] + H2O. Involved in unsaturated fatty acids biosynthesis. Catalyzes the dehydration of short chain beta-hydroxyacyl-ACPs and long chain saturated and unsaturated beta-hydroxyacyl-ACPs. The chain is 3-hydroxyacyl-[acyl-carrier-protein] dehydratase FabZ from Campylobacter concisus (strain 13826).